The chain runs to 189 residues: MNDKTTRGRASKVDLLPPNIKSTLTMMLRDKQYSQAEILEEINNIIADSGLDESMQLSKTGLNRFASKMERFGKKIREAREVAEVWTKQLVEAPQSDIGKLLMEAVKTMAFDLTLNADEAVANDPKFLNQLALIANRIEQAQSISEERERKVRKEVAQQAADTAEKVISQAGLSADTVAQIKQQILGIA.

To phage Mu protein gp27.

The protein is Mu-like prophage FluMu protein gp27 of Haemophilus influenzae (strain ATCC 51907 / DSM 11121 / KW20 / Rd).